We begin with the raw amino-acid sequence, 156 residues long: ATP synthase subunit b (156 aa).

A helical membrane pass occupies residues 7–29; the sequence is LFAQMVVFLVLAWFTMKFVWPPL.

This sequence belongs to the ATPase B chain family. As to quaternary structure, F-type ATPases have 2 components, F(1) - the catalytic core - and F(0) - the membrane proton channel. F(1) has five subunits: alpha(3), beta(3), gamma(1), delta(1), epsilon(1). F(0) has three main subunits: a(1), b(2) and c(10-14). The alpha and beta chains form an alternating ring which encloses part of the gamma chain. F(1) is attached to F(0) by a central stalk formed by the gamma and epsilon chains, while a peripheral stalk is formed by the delta and b chains.

Its subcellular location is the cell inner membrane. F(1)F(0) ATP synthase produces ATP from ADP in the presence of a proton or sodium gradient. F-type ATPases consist of two structural domains, F(1) containing the extramembraneous catalytic core and F(0) containing the membrane proton channel, linked together by a central stalk and a peripheral stalk. During catalysis, ATP synthesis in the catalytic domain of F(1) is coupled via a rotary mechanism of the central stalk subunits to proton translocation. In terms of biological role, component of the F(0) channel, it forms part of the peripheral stalk, linking F(1) to F(0). The chain is ATP synthase subunit b from Burkholderia lata (strain ATCC 17760 / DSM 23089 / LMG 22485 / NCIMB 9086 / R18194 / 383).